We begin with the raw amino-acid sequence, 203 residues long: Holliday junction branch migration complex subunit RuvA (203 aa).

The domain I stretch occupies residues 1-64; it reads MIGRLRGIII…EDAQLLYGFN (64 aa). The tract at residues 65–142 is domain II; it reads NKQERTLFKE…KGLHGDLFTP (78 aa). Residues 143 to 154 are flexible linker; it reads AADLVLTSPASP. The segment at 155–203 is domain III; it reads ATDDAEQEAVAALVALGYKPQEASRMVSKIARPDASSETLIREALHAAL.

It belongs to the RuvA family. In terms of assembly, homotetramer. Forms an RuvA(8)-RuvB(12)-Holliday junction (HJ) complex. HJ DNA is sandwiched between 2 RuvA tetramers; dsDNA enters through RuvA and exits via RuvB. An RuvB hexamer assembles on each DNA strand where it exits the tetramer. Each RuvB hexamer is contacted by two RuvA subunits (via domain III) on 2 adjacent RuvB subunits; this complex drives branch migration. In the full resolvosome a probable DNA-RuvA(4)-RuvB(12)-RuvC(2) complex forms which resolves the HJ.

Its subcellular location is the cytoplasm. The RuvA-RuvB-RuvC complex processes Holliday junction (HJ) DNA during genetic recombination and DNA repair, while the RuvA-RuvB complex plays an important role in the rescue of blocked DNA replication forks via replication fork reversal (RFR). RuvA specifically binds to HJ cruciform DNA, conferring on it an open structure. The RuvB hexamer acts as an ATP-dependent pump, pulling dsDNA into and through the RuvAB complex. HJ branch migration allows RuvC to scan DNA until it finds its consensus sequence, where it cleaves and resolves the cruciform DNA. This chain is Holliday junction branch migration complex subunit RuvA, found in Escherichia fergusonii (strain ATCC 35469 / DSM 13698 / CCUG 18766 / IAM 14443 / JCM 21226 / LMG 7866 / NBRC 102419 / NCTC 12128 / CDC 0568-73).